A 200-amino-acid chain; its full sequence is MPIGVPKVAYRLPGESTPQWVDLYNRLYRERVLFLGSGLDDELANQLNGIMLYLSAEDASRSLFLYINSPGGSVTAGLSVFDIMNYVQASVTTIGIGFAASMASFILAGGERGSRIALPHCRVMIHQPQGGMEGQASEVVLEKEEIVRLRRLIGRLYVDLTGQPLSTIANDLDRDKYLSAREAREYGLVDLVATTETATV.

S101 serves as the catalytic Nucleophile. Residue H126 is part of the active site.

Belongs to the peptidase S14 family. As to quaternary structure, component of the chloroplastic Clp protease core complex.

The protein localises to the plastid. It localises to the chloroplast stroma. The catalysed reaction is Hydrolysis of proteins to small peptides in the presence of ATP and magnesium. alpha-casein is the usual test substrate. In the absence of ATP, only oligopeptides shorter than five residues are hydrolyzed (such as succinyl-Leu-Tyr-|-NHMec, and Leu-Tyr-Leu-|-Tyr-Trp, in which cleavage of the -Tyr-|-Leu- and -Tyr-|-Trp bonds also occurs).. Cleaves peptides in various proteins in a process that requires ATP hydrolysis. Has a chymotrypsin-like activity. Plays a major role in the degradation of misfolded proteins. The polypeptide is ATP-dependent Clp protease proteolytic subunit (Ostreococcus tauri).